Reading from the N-terminus, the 68-residue chain is Protein SlyX homolog (68 aa).

It belongs to the SlyX family.

The chain is Protein SlyX homolog from Pseudomonas putida (strain GB-1).